We begin with the raw amino-acid sequence, 744 residues long: Tripartite motif-containing protein 2 (744 aa).

Residue Ser10 is modified to Phosphoserine. The RING-type zinc-finger motif lies at 23–64 (CSICLERYKNPKVLPCLHTFCERCLQNYIPAHSLTLSCPVCR). A B box-type zinc finger spans residues 113-154 (GKPLSCPNHDGNVMEFYCQSCETAMCRECTEGEHAEHPTVPL). Zn(2+)-binding residues include Cys118, His121, Cys141, and His146. The stretch at 320–421 (TTNAVASETV…IRGSPFKLKV (102 aa)) is one Filamin repeat. Thr371 carries the post-translational modification Phosphothreonine. 3 positions are modified to phosphoserine: Ser375, Ser424, and Ser428. The tract at residues 432–462 (EGVKRRVKSPGSGHVKQKAVKRPASMYSTGK) is disordered. 6 NHL repeats span residues 473–516 (IFRV…FSND), 520–563 (KSRF…FSND), 564–605 (GKFK…FQPN), 609–652 (VTRF…FNQE), 656–699 (MLKF…FDGS), and 700–743 (GSFL…YRYL).

It belongs to the TRIM/RBCC family. In terms of assembly, forms homooligomers. Interacts with TRIM3; this interaction reduces TRIM2 activity. Interacts with myosin V; myosin V may not be a substrate for ubiquitination. Interacts with NEFL. Interacts with phosphorylated BCL2L11. Interacts with SIRPA. In terms of processing, RING-type zinc finger-dependent and UBE2D1-dependent autoubiquitination.

The catalysed reaction is S-ubiquitinyl-[E2 ubiquitin-conjugating enzyme]-L-cysteine + [acceptor protein]-L-lysine = [E2 ubiquitin-conjugating enzyme]-L-cysteine + N(6)-ubiquitinyl-[acceptor protein]-L-lysine.. It participates in protein modification; protein ubiquitination. Functionally, UBE2D1-dependent E3 ubiquitin-protein ligase that mediates the ubiquitination of NEFL and of phosphorylated BCL2L11. Plays a neuroprotective function. May play a role in neuronal rapid ischemic tolerance. Plays a role in antiviral immunity and limits New World arenavirus infection independently of its ubiquitin ligase activity. This Rattus norvegicus (Rat) protein is Tripartite motif-containing protein 2 (Trim2).